Here is a 126-residue protein sequence, read N- to C-terminus: NADH-quinone oxidoreductase subunit A (126 aa).

The next 3 helical transmembrane spans lie at 16 to 36, 73 to 93, and 95 to 115; these read ILVLLAMAIGLGLILIAAAAI, ILFIIFDLEVAFLFPWAVAFG, and MSMTAFWSMMVFLSVLTVGFA.

Belongs to the complex I subunit 3 family. NDH-1 is composed of 14 different subunits. Subunits NuoA, H, J, K, L, M, N constitute the membrane sector of the complex.

The protein resides in the cell inner membrane. It carries out the reaction a quinone + NADH + 5 H(+)(in) = a quinol + NAD(+) + 4 H(+)(out). In terms of biological role, NDH-1 shuttles electrons from NADH, via FMN and iron-sulfur (Fe-S) centers, to quinones in the respiratory chain. The immediate electron acceptor for the enzyme in this species is believed to be ubiquinone. Couples the redox reaction to proton translocation (for every two electrons transferred, four hydrogen ions are translocated across the cytoplasmic membrane), and thus conserves the redox energy in a proton gradient. This chain is NADH-quinone oxidoreductase subunit A, found in Rhodobacter capsulatus (Rhodopseudomonas capsulata).